The sequence spans 417 residues: Tryptophan synthase beta chain (417 aa).

The residue at position 110 (lysine 110) is an N6-(pyridoxal phosphate)lysine.

The protein belongs to the TrpB family. In terms of assembly, tetramer of two alpha and two beta chains. The cofactor is pyridoxal 5'-phosphate.

It catalyses the reaction (1S,2R)-1-C-(indol-3-yl)glycerol 3-phosphate + L-serine = D-glyceraldehyde 3-phosphate + L-tryptophan + H2O. Its pathway is amino-acid biosynthesis; L-tryptophan biosynthesis; L-tryptophan from chorismate: step 5/5. In terms of biological role, the beta subunit is responsible for the synthesis of L-tryptophan from indole and L-serine. The sequence is that of Tryptophan synthase beta chain from Prochlorococcus marinus (strain NATL2A).